The sequence spans 216 residues: Maleylacetoacetate isomerase (216 aa).

Position 1 is an N-acetylmethionine (Met1). Positions 4 to 87 constitute a GST N-terminal domain; the sequence is GKPVLYSYFR…YLEETRPIPR (84 aa). Glutathione contacts are provided by residues 14–19 and Gln45; that span reads SSCSWR. Lys57 bears the N6-succinyllysine mark. Glutathione-binding positions include Val59, 71–72, Gln111, and 115–117; these read QS and NLS. Positions 92–212 constitute a GST C-terminal domain; the sequence is DPQKRAIVRM…HPCRQPDTPA (121 aa). Thr136 bears the Phosphothreonine mark. Ser137 carries the post-translational modification Phosphoserine. Lys177 is subject to N6-succinyllysine. A Phosphoserine modification is found at Ser181.

Belongs to the GST superfamily. Zeta family. In terms of assembly, homodimer. Requires glutathione as cofactor. The N-terminus is blocked.

The protein resides in the cytoplasm. The catalysed reaction is 4-maleylacetoacetate = 4-fumarylacetoacetate. It catalyses the reaction RX + glutathione = an S-substituted glutathione + a halide anion + H(+). The protein operates within amino-acid degradation; L-phenylalanine degradation; acetoacetate and fumarate from L-phenylalanine: step 5/6. Probable bifunctional enzyme showing minimal glutathione-conjugating activity with ethacrynic acid and 7-chloro-4-nitrobenz-2-oxa-1, 3-diazole and maleylacetoacetate isomerase activity. Also has low glutathione peroxidase activity with t-butyl and cumene hydroperoxides. Is able to catalyze the glutathione dependent oxygenation of dichloroacetic acid to glyoxylic acid. The polypeptide is Maleylacetoacetate isomerase (Gstz1) (Rattus norvegicus (Rat)).